Consider the following 253-residue polypeptide: Acetylglutamate kinase (253 aa).

Substrate contacts are provided by residues 37 to 38 (GG), R59, and N149.

The protein belongs to the acetylglutamate kinase family. ArgB subfamily.

Its subcellular location is the cytoplasm. The enzyme catalyses N-acetyl-L-glutamate + ATP = N-acetyl-L-glutamyl 5-phosphate + ADP. It functions in the pathway amino-acid biosynthesis; L-arginine biosynthesis; N(2)-acetyl-L-ornithine from L-glutamate: step 2/4. In terms of biological role, catalyzes the ATP-dependent phosphorylation of N-acetyl-L-glutamate. The sequence is that of Acetylglutamate kinase from Rubrobacter xylanophilus (strain DSM 9941 / JCM 11954 / NBRC 16129 / PRD-1).